A 791-amino-acid chain; its full sequence is Lon protease (791 aa).

Residues 3 to 209 form the Lon N-terminal domain; the sequence is KPILISRAIV…TILHLLFDQL (207 aa). 365–372 provides a ligand contact to ATP; the sequence is GPPGVGKT. The Lon proteolytic domain occupies 605–790; sequence TTIPGIVNGM…DEVYNIVFGE (186 aa). Active-site residues include serine 696 and lysine 739.

Belongs to the peptidase S16 family. In terms of assembly, homohexamer. Organized in a ring with a central cavity.

The protein localises to the cytoplasm. The enzyme catalyses Hydrolysis of proteins in presence of ATP.. In terms of biological role, ATP-dependent serine protease that mediates the selective degradation of mutant and abnormal proteins as well as certain short-lived regulatory proteins. Required for cellular homeostasis and for survival from DNA damage and developmental changes induced by stress. Degrades polypeptides processively to yield small peptide fragments that are 5 to 10 amino acids long. Binds to DNA in a double-stranded, site-specific manner. This chain is Lon protease, found in Ureaplasma parvum serovar 3 (strain ATCC 27815 / 27 / NCTC 11736).